We begin with the raw amino-acid sequence, 422 residues long: GPI mannosyltransferase 1 (422 aa).

The next 8 helical transmembrane spans lie at 10–30 (TTPLFTISLLLRLGLLFYGIY), 82–102 (FPAFGKLVFAAADLLAGWLIL), 162–182 (IILGLSVHFKIYPFIYAPAIV), 216–236 (LKFGLLSLITFMILNLVMFAI), 282–302 (IESFAFLPQLLLSCVLIPLAL), 327–347 (SQYFLWYMIFLPLYLPNSSFL), 352–372 (LGIFALLLWIVSQAAWLQQGY), and 385–405 (GLWLASIAFFLVNCWILGVII).

It belongs to the PIGM family.

The protein resides in the endoplasmic reticulum membrane. It participates in glycolipid biosynthesis; glycosylphosphatidylinositol-anchor biosynthesis. In terms of biological role, mannosyltransferase involved in glycosylphosphatidylinositol-anchor biosynthesis. Transfers the first alpha-1,4-mannose to GlcN-acyl-PI during GPI precursor assembly. Required for cell wall integrity. This is GPI mannosyltransferase 1 (GPI14) from Gibberella zeae (strain ATCC MYA-4620 / CBS 123657 / FGSC 9075 / NRRL 31084 / PH-1) (Wheat head blight fungus).